Here is a 353-residue protein sequence, read N- to C-terminus: RNA 3'-terminal phosphate cyclase (353 aa).

Residues glutamine 103 and 297–301 contribute to the ATP site; that span reads HLADQ. The active-site Tele-AMP-histidine intermediate is the histidine 322.

It belongs to the RNA 3'-terminal cyclase family. Type 1 subfamily.

It is found in the cytoplasm. The enzyme catalyses a 3'-end 3'-phospho-ribonucleotide-RNA + ATP = a 3'-end 2',3'-cyclophospho-ribonucleotide-RNA + AMP + diphosphate. In terms of biological role, catalyzes the conversion of 3'-phosphate to a 2',3'-cyclic phosphodiester at the end of RNA. The mechanism of action of the enzyme occurs in 3 steps: (A) adenylation of the enzyme by ATP; (B) transfer of adenylate to an RNA-N3'P to produce RNA-N3'PP5'A; (C) and attack of the adjacent 2'-hydroxyl on the 3'-phosphorus in the diester linkage to produce the cyclic end product. The biological role of this enzyme is unknown but it is likely to function in some aspects of cellular RNA processing. This chain is RNA 3'-terminal phosphate cyclase, found in Salmonella heidelberg (strain SL476).